The chain runs to 193 residues: Protein Syd (193 aa).

This sequence belongs to the Syd family.

Its subcellular location is the cell inner membrane. Interacts with the SecY protein in vivo. May bind preferentially to an uncomplexed state of SecY, thus functioning either as a chelating agent for excess SecY in the cell or as a regulatory factor that negatively controls the translocase function. In Tolumonas auensis (strain DSM 9187 / NBRC 110442 / TA 4), this protein is Protein Syd.